The chain runs to 162 residues: Large ribosomal subunit protein uL30 (162 aa).

It belongs to the universal ribosomal protein uL30 family. As to quaternary structure, part of the 50S ribosomal subunit.

The protein is Large ribosomal subunit protein uL30 of Staphylothermus marinus (strain ATCC 43588 / DSM 3639 / JCM 9404 / F1).